A 544-amino-acid polypeptide reads, in one-letter code: Carboxypeptidase Y homolog A (544 aa).

The first 17 residues, 1-17 (MKSLALALLVGGAIASG), serve as a signal peptide directing secretion. A propeptide spanning residues 18–124 (PQQQVLREPV…RLDTYDLRVK (107 aa)) is cleaved from the precursor. 5 disulfide bridges follow: cysteine 178/cysteine 417, cysteine 312/cysteine 326, cysteine 336/cysteine 359, cysteine 343/cysteine 352, and cysteine 381/cysteine 387. Residue asparagine 209 is glycosylated (N-linked (GlcNAc...) asparagine). The active site involves serine 265. The active site involves aspartate 456. Asparagine 506 carries N-linked (GlcNAc...) asparagine glycosylation. Histidine 517 is a catalytic residue.

Belongs to the peptidase S10 family.

The protein resides in the vacuole. The catalysed reaction is Release of a C-terminal amino acid with broad specificity.. Functionally, vacuolar carboxypeptidase involved in degradation of small peptides. Digests preferentially peptides containing an aliphatic or hydrophobic residue in P1' position, as well as methionine, leucine or phenylalanine in P1 position of ester substrate. The chain is Carboxypeptidase Y homolog A (CPYA) from Ajellomyces capsulatus (strain G186AR / H82 / ATCC MYA-2454 / RMSCC 2432) (Darling's disease fungus).